A 37-amino-acid chain; its full sequence is Cytochrome b6-f complex subunit 7 (37 aa).

A helical transmembrane segment spans residues 5-25; that stretch reads IFGTAFLFIVLVPVGLALGAF.

It belongs to the PetM family. The 4 large subunits of the cytochrome b6-f complex are cytochrome b6, subunit IV (17 kDa polypeptide, PetD), cytochrome f and the Rieske protein, while the 4 small subunits are PetG, PetL, PetM and PetN. The complex functions as a dimer.

It is found in the cellular thylakoid membrane. Its function is as follows. Component of the cytochrome b6-f complex, which mediates electron transfer between photosystem II (PSII) and photosystem I (PSI), cyclic electron flow around PSI, and state transitions. The sequence is that of Cytochrome b6-f complex subunit 7 from Synechococcus elongatus (strain ATCC 33912 / PCC 7942 / FACHB-805) (Anacystis nidulans R2).